The sequence spans 181 residues: Type II secretion system protein H (181 aa).

Residues Met1–Gly5 constitute a propeptide, leader sequence. Residue Phe6 is modified to N-methylphenylalanine. Residues Phe6–Ile29 traverse the membrane as a helical segment.

The protein belongs to the GSP H family. Type II secretion is composed of four main components: the outer membrane complex, the inner membrane complex, the cytoplasmic secretion ATPase and the periplasm-spanning pseudopilus. Interacts with core component OutG. Cleaved by prepilin peptidase. Post-translationally, methylated by prepilin peptidase at the amino group of the N-terminal phenylalanine once the leader sequence is cleaved by prepilin peptidase.

It localises to the cell inner membrane. Its function is as follows. Component of the type II secretion system required for the energy-dependent secretion of extracellular factors such as proteases and toxins from the periplasm. Part of the pseudopilus tip complex that is critical for the recognition and binding of secretion substrates. This is Type II secretion system protein H (outH) from Dickeya chrysanthemi (Pectobacterium chrysanthemi).